Reading from the N-terminus, the 152-residue chain is Large ribosomal subunit protein bL9 (152 aa).

This sequence belongs to the bacterial ribosomal protein bL9 family.

In terms of biological role, binds to the 23S rRNA. The chain is Large ribosomal subunit protein bL9 from Rippkaea orientalis (strain PCC 8801 / RF-1) (Cyanothece sp. (strain PCC 8801)).